Reading from the N-terminus, the 1296-residue chain is Probable serine/threonine protein kinase IREH1 (1296 aa).

Disordered regions lie at residues 1-274, 457-480, and 524-553; these read MVFK…SESP, SGAGRSYSAAKVPSTKKAYSQEQH, and SPALKTVKEAPASEEQNDSKVEPPNIVGSR. Positions 10 to 32 are enriched in low complexity; that stretch reads SSKKSGSSSPDSSNSPRSVGSNS. The residue at position 32 (serine 32) is a Phosphoserine. 3 stretches are compositionally biased toward basic and acidic residues: residues 68–77, 101–112, and 178–208; these read DGLKKKDGSS, EVKKPPPPEVKE, and RKKEAGSSKLGLEENMDRTRPSDNKSDRDSL. A compositionally biased stretch (low complexity) spans 214 to 249; sequence PPRSLSPTLPPSGSRLQNVASSSGTGRSEMSSGRSG. A C2H2-type; atypical zinc finger spans residues 602 to 621; it reads CRICEEEVPTTHVEDHSRVC. The interval 724 to 750 is disordered; that stretch reads FGPKSDQGMTTSSASSMTPRSPIPTPR. Polar residues predominate over residues 730 to 740; sequence QGMTTSSASSM. Positions 882 to 1171 constitute a Protein kinase domain; that stretch reads FEIIKPISRG…AAEVKQHIFF (290 aa). ATP-binding positions include 888–896 and lysine 911; that span reads ISRGAFGRV. Catalysis depends on aspartate 1005, which acts as the Proton acceptor. Serine 1070 is subject to Phosphoserine. The region spanning 1172 to 1277 is the AGC-kinase C-terminal domain; sequence KDINWDTLAR…KNLSQLASIN (106 aa). The interval 1214 to 1245 is disordered; that stretch reads PSGEVPDYSDADSMTNSSGCSSNHHEEGEAEE. Over residues 1225–1235 the composition is skewed to polar residues; it reads DSMTNSSGCSS. Basic and acidic residues predominate over residues 1236-1245; the sequence is NHHEEGEAEE.

This sequence belongs to the protein kinase superfamily. AGC Ser/Thr protein kinase family.

The catalysed reaction is L-seryl-[protein] + ATP = O-phospho-L-seryl-[protein] + ADP + H(+). It carries out the reaction L-threonyl-[protein] + ATP = O-phospho-L-threonyl-[protein] + ADP + H(+). May be involved in root hair elongation. This Arabidopsis thaliana (Mouse-ear cress) protein is Probable serine/threonine protein kinase IREH1.